Reading from the N-terminus, the 472-residue chain is N(6)-adenine-specific methyltransferase METTL4 (472 aa).

Belongs to the MT-A70-like family.

Its subcellular location is the nucleus. It localises to the cytoplasm. The protein localises to the cytosol. It is found in the mitochondrion matrix. The catalysed reaction is a 2'-O-methyladenosine in U2 snRNA + S-adenosyl-L-methionine = an N(6)-methyl-2'-O-methyladenosine in U2 snRNA + S-adenosyl-L-homocysteine + H(+). The enzyme catalyses a 2'-deoxyadenosine in DNA + S-adenosyl-L-methionine = an N(6)-methyl-2'-deoxyadenosine in DNA + S-adenosyl-L-homocysteine + H(+). Functionally, n(6)-adenine-specific methyltransferase that can methylate both RNAs and DNA. Acts as a N(6)-adenine-specific RNA methyltransferase by catalyzing formation of N6,2'-O-dimethyladenosine (m6A(m)) on internal positions of U2 small nuclear RNA (snRNA): methylates the 6th position of adenine residues with a pre-deposited 2'-O-methylation. Internal m6A(m) methylation of snRNAs regulates RNA splicing. Also able to act as a N(6)-adenine-specific DNA methyltransferase by mediating methylation of DNA on the 6th position of adenine (N(6)-methyladenosine). The existence of N(6)-methyladenosine (m6A) on DNA is however unclear in mammals, and additional evidences are required to confirm the role of the N(6)-adenine-specific DNA methyltransferase activity of METTL4 in vivo. Acts as a regulator of mitochondrial transcript levels and mitochondrial DNA (mtDNA) copy number by mediating mtDNA N(6)-methylation: m6A on mtDNA reduces transcription by repressing TFAM DNA-binding and bending. N(6)-methyladenosine deposition by METTL4 regulates Polycomb silencing by triggering ubiquitination and degradation of sensor proteins ASXL1 and MPND, leading to inactivation of the PR-DUB complex and subsequent preservation of Polycomb silencing. The sequence is that of N(6)-adenine-specific methyltransferase METTL4 from Homo sapiens (Human).